A 137-amino-acid chain; its full sequence is Leaf-specific thionin DB4 (137 aa).

Positions 1-28 (MAPSKSIKSVVICVLILGLVLEQVQVEG) are cleaved as a signal peptide. 4 disulfides stabilise this stretch: cysteine 31–cysteine 68, cysteine 32–cysteine 60, cysteine 40–cysteine 58, and cysteine 44–cysteine 54. The propeptide at 75–137 (LNLLPESGEP…DGAVIQSVEA (63 aa)) is acidic domain.

The protein belongs to the plant thionin (TC 1.C.44) family. 4 C-C subfamily.

The protein resides in the secreted. Its function is as follows. Thionins are small plant proteins which are toxic to animal cells. They seem to exert their toxic effect at the level of the cell membrane. Their precise function is not known. The polypeptide is Leaf-specific thionin DB4 (THI1.3) (Hordeum vulgare (Barley)).